Consider the following 280-residue polypeptide: MAERLLQSMSRVAGRCHPDCVKASDEQEDYHASQNAALVAVNLISSARLILKLDAEFTEYSAQFLMDNAGKEDDPGEVDQQRNQVTTENCLRYLAENVWTKKENGQGGMDQQRPVLTVKDCLELAFKKGLPRREHWAHLGCTFKAPPFACQIPRVPVKGEVVEVKTFDEAFKLLVHQPIGAKLHLFSPQIDNVGEGVYKGLTTGNETHYVGLRDVLIASVEEFEGDSVAIVKICYKKKLSFIKVSLSVRFLSVAHDGDKSKFIAPTGLLVDFCVPRLSIN.

The protein belongs to the heat induced plant HTT protein family. As to expression, expressed in seedlings, leaves, stems, inflorescences and siliques.

It is found in the cytoplasm. It localises to the nucleus. In terms of biological role, mediates both basal and acquired thermotolerance. This Arabidopsis thaliana (Mouse-ear cress) protein is Protein HEAT-INDUCED TAS1 TARGET 4.